The sequence spans 227 residues: MNNLITENQNLNIKDQICEIEIKNTIVFNKNNINNNNNNNSNSSIKKCLKSSFNESINENNILTFEIQPNGTYKNYFSNEIPNEIQHLIVEEELYKQFIVKINNKRLPIYYQIMLILMILSMILIIPLFFIVFTFSPRLAFGICLTLLFYIAIFILTNGLIEKRIVLILTYFVLYKKKNYKIEEIILNYNSFLINKKIPILFRLIYKENHVVPGFDKISIEVTFINE.

2 helical membrane passes run I113–F133 and F141–I161.

Its subcellular location is the membrane. This is an uncharacterized protein from Dictyostelium discoideum (Social amoeba).